Consider the following 243-residue polypeptide: tRNA (guanine-N(1)-)-methyltransferase (243 aa).

S-adenosyl-L-methionine-binding positions include glycine 108 and 127-132 (LGDFVL).

Belongs to the RNA methyltransferase TrmD family. As to quaternary structure, homodimer.

The protein resides in the cytoplasm. It carries out the reaction guanosine(37) in tRNA + S-adenosyl-L-methionine = N(1)-methylguanosine(37) in tRNA + S-adenosyl-L-homocysteine + H(+). Its function is as follows. Specifically methylates guanosine-37 in various tRNAs. The protein is tRNA (guanine-N(1)-)-methyltransferase of Streptococcus equi subsp. equi (strain 4047).